The primary structure comprises 337 residues: tRNA N6-adenosine threonylcarbamoyltransferase (337 aa).

2 residues coordinate Fe cation: His111 and His115. Substrate contacts are provided by residues 134–138, Asp167, Gly180, and Asn272; that span reads LVSGG. Asp300 lines the Fe cation pocket.

It belongs to the KAE1 / TsaD family. The cofactor is Fe(2+).

Its subcellular location is the cytoplasm. It catalyses the reaction L-threonylcarbamoyladenylate + adenosine(37) in tRNA = N(6)-L-threonylcarbamoyladenosine(37) in tRNA + AMP + H(+). Functionally, required for the formation of a threonylcarbamoyl group on adenosine at position 37 (t(6)A37) in tRNAs that read codons beginning with adenine. Is involved in the transfer of the threonylcarbamoyl moiety of threonylcarbamoyl-AMP (TC-AMP) to the N6 group of A37, together with TsaE and TsaB. TsaD likely plays a direct catalytic role in this reaction. This chain is tRNA N6-adenosine threonylcarbamoyltransferase, found in Photorhabdus laumondii subsp. laumondii (strain DSM 15139 / CIP 105565 / TT01) (Photorhabdus luminescens subsp. laumondii).